Consider the following 272-residue polypeptide: Regulatory protein RecX (272 aa).

This sequence belongs to the RecX family.

It localises to the cytoplasm. Modulates RecA activity. This is Regulatory protein RecX from Staphylococcus aureus (strain Newman).